The chain runs to 209 residues: Large ribosomal subunit protein uL3 (209 aa).

At Gln150 the chain carries N5-methylglutamine.

It belongs to the universal ribosomal protein uL3 family. As to quaternary structure, part of the 50S ribosomal subunit. Forms a cluster with proteins L14 and L19. Methylated by PrmB.

One of the primary rRNA binding proteins, it binds directly near the 3'-end of the 23S rRNA, where it nucleates assembly of the 50S subunit. In Photobacterium profundum (strain SS9), this protein is Large ribosomal subunit protein uL3.